Consider the following 474-residue polypeptide: Dihydrolipoyl dehydrogenase (474 aa).

Residues 34–42 (EKEKLGGTC), lysine 51, and glycine 114 contribute to the FAD site. An intrachain disulfide couples cysteine 42 to cysteine 47. NAD(+)-binding positions include 188–192 (GGGVI), glutamate 211, valine 245, and 278–281 (SIGR). FAD contacts are provided by aspartate 320 and alanine 328. Residue histidine 453 is the Proton acceptor of the active site.

Belongs to the class-I pyridine nucleotide-disulfide oxidoreductase family. As to quaternary structure, homodimer. The cofactor is FAD.

It is found in the cytoplasm. It carries out the reaction N(6)-[(R)-dihydrolipoyl]-L-lysyl-[protein] + NAD(+) = N(6)-[(R)-lipoyl]-L-lysyl-[protein] + NADH + H(+). In terms of biological role, the branched-chain alpha-keto dehydrogenase complex catalyzes the overall conversion of alpha-keto acids to acyl-CoA and CO(2). It contains multiple copies of 3 enzymatic components: branched-chain alpha-keto acid decarboxylase (E1), lipoamide acyltransferase (E2) and lipoamide dehydrogenase (E3). This chain is Dihydrolipoyl dehydrogenase (bfmBC), found in Bacillus subtilis (strain 168).